A 202-amino-acid polypeptide reads, in one-letter code: Holliday junction branch migration complex subunit RuvA (202 aa).

Positions 1-64 are domain I; sequence MIGRLRGTLA…EDAQLLYGFA (64 aa). The tract at residues 65–143 is domain II; that stretch reads GKRERDFFRE…AWETSPAMFA (79 aa). Residues 144 to 154 are flexible linker; it reads LVPNQPDGPAP. Positions 154 to 202 are domain III; sequence PVNTAENDAVSALISLGYKPQEASKAISAIKEKGLSSEDMIRRALKGMI.

It belongs to the RuvA family. Homotetramer. Forms an RuvA(8)-RuvB(12)-Holliday junction (HJ) complex. HJ DNA is sandwiched between 2 RuvA tetramers; dsDNA enters through RuvA and exits via RuvB. An RuvB hexamer assembles on each DNA strand where it exits the tetramer. Each RuvB hexamer is contacted by two RuvA subunits (via domain III) on 2 adjacent RuvB subunits; this complex drives branch migration. In the full resolvosome a probable DNA-RuvA(4)-RuvB(12)-RuvC(2) complex forms which resolves the HJ.

It is found in the cytoplasm. Its function is as follows. The RuvA-RuvB-RuvC complex processes Holliday junction (HJ) DNA during genetic recombination and DNA repair, while the RuvA-RuvB complex plays an important role in the rescue of blocked DNA replication forks via replication fork reversal (RFR). RuvA specifically binds to HJ cruciform DNA, conferring on it an open structure. The RuvB hexamer acts as an ATP-dependent pump, pulling dsDNA into and through the RuvAB complex. HJ branch migration allows RuvC to scan DNA until it finds its consensus sequence, where it cleaves and resolves the cruciform DNA. The sequence is that of Holliday junction branch migration complex subunit RuvA from Pseudomonas fluorescens (strain Pf0-1).